Here is a 343-residue protein sequence, read N- to C-terminus: Ribosomal RNA small subunit methyltransferase C (343 aa).

The protein belongs to the methyltransferase superfamily. RsmC family. As to quaternary structure, monomer.

It localises to the cytoplasm. It carries out the reaction guanosine(1207) in 16S rRNA + S-adenosyl-L-methionine = N(2)-methylguanosine(1207) in 16S rRNA + S-adenosyl-L-homocysteine + H(+). Functionally, specifically methylates the guanine in position 1207 of 16S rRNA in the 30S particle. This chain is Ribosomal RNA small subunit methyltransferase C, found in Escherichia coli O6:H1 (strain CFT073 / ATCC 700928 / UPEC).